Reading from the N-terminus, the 493-residue chain is METLLKISGVDKSFPGVKALNNACLSVYAGRVMALMGENGAGKSTLMKVLTGIYSKDAGTIEYLNRSVNFNGPKASQEAGISIIHQELNLVGNLTIAENIFLGREFKTSWGAINWQKMHQEADKLLARLGVTHSSKQLCAELSIGEQQMVEIAKALSFESKVIIMDEPTDALTDTETEALFNVIRELKAENRGIVYISHRLKEIFQICDDVTVLRDGQFIGERVMAEITEDDLIEMMVGRRLDEQYPHLSQEKGECVLDVKHVSGSGIDDVSFKLHAGEIVGVSGLMGAGRTELGKLLYGALPKTAGKVRLKNQEIENRSPQDGLDNGIVYISEDRKGDGLVLGMSVKENMSLTSLDHFSQKGGIRHQAEKMAVDDFILMFNIKTPNRDQQVGLLSGGNQQKVAIARGLMTRPNVLILDEPTRGVDVGAKKEIYQLINEFKKEGLSILMISSDMPEVLGMSDRVLVMREGKISAEFSREEATQEKLLAAAIGK.

2 ABC transporter domains span residues 5 to 241 and 252 to 491; these read LKIS…VGRR and EKGE…AAAI. 37–44 serves as a coordination point for ATP; it reads GENGAGKS.

Belongs to the ABC transporter superfamily. Ribose importer (TC 3.A.1.2.1) family. As to quaternary structure, the complex is composed of an ATP-binding protein (RbsA), two transmembrane proteins (RbsC) and a solute-binding protein (RbsB).

It is found in the cell inner membrane. It carries out the reaction D-ribose(out) + ATP + H2O = D-ribose(in) + ADP + phosphate + H(+). In terms of biological role, part of the ABC transporter complex RbsABC involved in ribose import. Responsible for energy coupling to the transport system. The sequence is that of Ribose import ATP-binding protein RbsA from Haemophilus influenzae (strain ATCC 51907 / DSM 11121 / KW20 / Rd).